The primary structure comprises 944 residues: Protein translocase subunit SecA (944 aa).

ATP-binding positions include Gln77, 95–99 (GEGKT), and Asp484. Residues 920–944 (EQEKQTRKKKKKKPHEDESSKTKIG) form a disordered region. Positions 933-944 (PHEDESSKTKIG) are enriched in basic and acidic residues.

It belongs to the SecA family. Monomer and homodimer. Part of the essential Sec protein translocation apparatus which comprises SecA, SecYEG and auxiliary proteins SecDF. Other proteins may also be involved.

The protein resides in the cell membrane. It is found in the cytoplasm. The catalysed reaction is ATP + H2O + cellular proteinSide 1 = ADP + phosphate + cellular proteinSide 2.. Part of the Sec protein translocase complex. Interacts with the SecYEG preprotein conducting channel. Has a central role in coupling the hydrolysis of ATP to the transfer of proteins into and across the cell membrane, serving as an ATP-driven molecular motor driving the stepwise translocation of polypeptide chains across the membrane. This is Protein translocase subunit SecA from Mycoplasma mycoides subsp. mycoides SC (strain CCUG 32753 / NCTC 10114 / PG1).